Reading from the N-terminus, the 898-residue chain is Serine/threonine-protein kinase TAO3 (898 aa).

One can recognise a Protein kinase domain in the interval 24–277; that stretch reads FIDLHEIGHG…AAELLRHDFI (254 aa). ATP is bound by residues 30 to 38 and K53; that span reads IGHGSFGAV. D147 (proton acceptor) is an active-site residue. 2 disordered regions span residues 316–372 and 405–424; these read TRNG…EVMD and DEAG…SVQS. S324, S331, S343, S346, and S349 each carry phosphoserine. Low complexity predominate over residues 349–366; sequence SIPSVSVSTGSRSSSVNS. T357 is subject to Phosphothreonine. S359 bears the Phosphoserine mark. Over residues 405 to 416 the composition is skewed to basic and acidic residues; sequence DEAGHGDPRPEP. At S442 the chain carries Phosphoserine. Coiled coils occupy residues 452–502, 548–649, and 753–871; these read EQEN…THAN, FLES…HAML, and ILKT…QERE. The interval 565–596 is disordered; sequence EEMNEDHSTPKKEKQERISKHKENLQHTQAEE. K830 is subject to N6-acetyllysine.

It belongs to the protein kinase superfamily. STE Ser/Thr protein kinase family. STE20 subfamily. As to quaternary structure, self-associates. Interacts with ERN1 and TRAF2. Interaction with TRAF2 is facilitated under ER stress conditions, such as treatment with tunicamycin, and may promote TRAF2 phosphorylation. Interacts (via N-terminus) with STK25; the interaction promotes STK25 abundance at the level of protein expression and/or stability. In terms of processing, autophosphorylated. Phosphorylation at Ser-324 by ATM following DNA damage is required for activation of the p38/MAPK14 stress-activated MAPK cascade. Phosphorylated at Ser-324 and on Tyr residues during T cell activation. Phosphorylated by LRRK2. As to expression, ubiquitously expressed, with a higher expression in the retina.

It is found in the cytoplasm. Its subcellular location is the cell membrane. The protein localises to the membrane raft. The protein resides in the lipid droplet. It carries out the reaction L-seryl-[protein] + ATP = O-phospho-L-seryl-[protein] + ADP + H(+). The catalysed reaction is L-threonyl-[protein] + ATP = O-phospho-L-threonyl-[protein] + ADP + H(+). Its function is as follows. Serine/threonine-protein kinase that acts as a regulator of the p38/MAPK14 stress-activated MAPK cascade and of the MAPK8/JNK cascade. In response to DNA damage, involved in the G2/M transition DNA damage checkpoint by activating the p38/MAPK14 stress-activated MAPK cascade, probably by mediating phosphorylation of upstream MAP2K3 and MAP2K6 kinases. Inhibits basal activity of the MAPK8/JNK cascade and diminishes its activation in response to epidermal growth factor (EGF). Positively regulates canonical T cell receptor (TCR) signaling by preventing early PTPN6/SHP1-mediated inactivation of LCK, ensuring sustained TCR signaling that is required for optimal activation and differentiation of T cells. Phosphorylates PTPN6/SHP1 on 'Thr-396', leading to its polyubiquitination and subsequent proteasomal degradation. Required for cell surface expression of metalloprotease ADAM10 on type 1 transitional B cells which is necessary for their NOTCH-mediated development into marginal zone B cells. Also required for the NOTCH-mediated terminal differentiation of splenic conventional type 2 dendritic cells. Positively regulates osteoblast differentiation by acting as an upstream activator of the JNK pathway. Promotes JNK signaling in hepatocytes and positively regulates hepatocyte lipid storage by inhibiting beta-oxidation and triacylglycerol secretion while enhancing lipid synthesis. Restricts age-associated inflammation by negatively regulating differentiation of macrophages and their production of pro-inflammatory cytokines. Plays a role in negatively regulating the abundance of regulatory T cells in white adipose tissue. In Rattus norvegicus (Rat), this protein is Serine/threonine-protein kinase TAO3 (Taok3).